A 95-amino-acid chain; its full sequence is Co-chaperonin GroES (95 aa).

Belongs to the GroES chaperonin family. In terms of assembly, heptamer of 7 subunits arranged in a ring. Interacts with the chaperonin GroEL.

It localises to the cytoplasm. Together with the chaperonin GroEL, plays an essential role in assisting protein folding. The GroEL-GroES system forms a nano-cage that allows encapsulation of the non-native substrate proteins and provides a physical environment optimized to promote and accelerate protein folding. GroES binds to the apical surface of the GroEL ring, thereby capping the opening of the GroEL channel. This Streptococcus uberis (strain ATCC BAA-854 / 0140J) protein is Co-chaperonin GroES.